The primary structure comprises 173 residues: Crossover junction endodeoxyribonuclease RuvC (173 aa).

Catalysis depends on residues Asp-8, Glu-67, and Asp-139. 3 residues coordinate Mg(2+): Asp-8, Glu-67, and Asp-139.

The protein belongs to the RuvC family. Homodimer which binds Holliday junction (HJ) DNA. The HJ becomes 2-fold symmetrical on binding to RuvC with unstacked arms; it has a different conformation from HJ DNA in complex with RuvA. In the full resolvosome a probable DNA-RuvA(4)-RuvB(12)-RuvC(2) complex forms which resolves the HJ. Requires Mg(2+) as cofactor.

The protein resides in the cytoplasm. The enzyme catalyses Endonucleolytic cleavage at a junction such as a reciprocal single-stranded crossover between two homologous DNA duplexes (Holliday junction).. Functionally, the RuvA-RuvB-RuvC complex processes Holliday junction (HJ) DNA during genetic recombination and DNA repair. Endonuclease that resolves HJ intermediates. Cleaves cruciform DNA by making single-stranded nicks across the HJ at symmetrical positions within the homologous arms, yielding a 5'-phosphate and a 3'-hydroxyl group; requires a central core of homology in the junction. The consensus cleavage sequence is 5'-(A/T)TT(C/G)-3'. Cleavage occurs on the 3'-side of the TT dinucleotide at the point of strand exchange. HJ branch migration catalyzed by RuvA-RuvB allows RuvC to scan DNA until it finds its consensus sequence, where it cleaves and resolves the cruciform DNA. This chain is Crossover junction endodeoxyribonuclease RuvC, found in Photorhabdus laumondii subsp. laumondii (strain DSM 15139 / CIP 105565 / TT01) (Photorhabdus luminescens subsp. laumondii).